Consider the following 1000-residue polypeptide: Exportin-T (1000 aa).

The protein belongs to the exportin family.

Its subcellular location is the nucleus. It is found in the cytoplasm. In terms of biological role, tRNA nucleus export receptor which facilitates tRNA translocation across the nuclear pore complex. Involved in pre-tRNA splicing, probably by affecting the interaction of pre-tRNA with splicing endonuclease. This is Exportin-T (LOS1) from Debaryomyces hansenii (strain ATCC 36239 / CBS 767 / BCRC 21394 / JCM 1990 / NBRC 0083 / IGC 2968) (Yeast).